A 156-amino-acid polypeptide reads, in one-letter code: Riboflavin synthase (156 aa).

This sequence belongs to the DMRL synthase family.

It carries out the reaction 2 6,7-dimethyl-8-(1-D-ribityl)lumazine + H(+) = 5-amino-6-(D-ribitylamino)uracil + riboflavin. Its pathway is cofactor biosynthesis; riboflavin biosynthesis; riboflavin from 2-hydroxy-3-oxobutyl phosphate and 5-amino-6-(D-ribitylamino)uracil: step 2/2. The protein is Riboflavin synthase (ribC) of Methanocaldococcus jannaschii (strain ATCC 43067 / DSM 2661 / JAL-1 / JCM 10045 / NBRC 100440) (Methanococcus jannaschii).